The chain runs to 249 residues: 2-C-methyl-D-erythritol 4-phosphate cytidylyltransferase (249 aa).

This sequence belongs to the IspD/TarI cytidylyltransferase family. IspD subfamily.

The enzyme catalyses 2-C-methyl-D-erythritol 4-phosphate + CTP + H(+) = 4-CDP-2-C-methyl-D-erythritol + diphosphate. The protein operates within isoprenoid biosynthesis; isopentenyl diphosphate biosynthesis via DXP pathway; isopentenyl diphosphate from 1-deoxy-D-xylulose 5-phosphate: step 2/6. Catalyzes the formation of 4-diphosphocytidyl-2-C-methyl-D-erythritol from CTP and 2-C-methyl-D-erythritol 4-phosphate (MEP). The sequence is that of 2-C-methyl-D-erythritol 4-phosphate cytidylyltransferase from Shewanella oneidensis (strain ATCC 700550 / JCM 31522 / CIP 106686 / LMG 19005 / NCIMB 14063 / MR-1).